Consider the following 453-residue polypeptide: Cholesterol 7-desaturase nvd (453 aa).

The chain crosses the membrane as a helical span at residues 53 to 73; it reads IVEYILILTLMFAFSAILYVI. A Rieske domain is found at 126–229; the sequence is WFAVAETREL…VVETDGAIWI (104 aa). Residues cysteine 167, histidine 169, cysteine 187, and histidine 190 each coordinate [2Fe-2S] cluster.

The protein belongs to the cholesterol 7-desaturase family. [2Fe-2S] cluster serves as cofactor.

The protein resides in the membrane. The enzyme catalyses cholesterol + NADPH + O2 + H(+) = 7-dehydrocholesterol + NADP(+) + 2 H2O. It catalyses the reaction cholesterol + NADH + O2 + H(+) = 7-dehydrocholesterol + NAD(+) + 2 H2O. The protein operates within steroid hormone biosynthesis; dafachronic acid biosynthesis. Functionally, catalyzes the production of 7-dehydrocholesterol (7-DHC or cholesta-5,7-dien-3beta-ol) by inserting a double bond (desaturating) at the C7-C8 single bond of cholesterol. Essential regulator of steroid biosynthesis as this reaction is the first step in the synthesis of the steroid hormone Delta(7)-dafachronic acid. The chain is Cholesterol 7-desaturase nvd from Bombyx mori (Silk moth).